Consider the following 330-residue polypeptide: Aspartate--ammonia ligase (330 aa).

The protein belongs to the class-II aminoacyl-tRNA synthetase family. AsnA subfamily.

Its subcellular location is the cytoplasm. The catalysed reaction is L-aspartate + NH4(+) + ATP = L-asparagine + AMP + diphosphate + H(+). Its pathway is amino-acid biosynthesis; L-asparagine biosynthesis; L-asparagine from L-aspartate (ammonia route): step 1/1. In Escherichia coli O81 (strain ED1a), this protein is Aspartate--ammonia ligase.